The primary structure comprises 529 residues: Cytochrome P450 monooxygenase ausG (529 aa).

Residues 31-51 (FLVTCGLPWLLLLFSVTIILF) traverse the membrane as a helical segment. Position 470 (Cys-470) interacts with heme.

It belongs to the cytochrome P450 family. Heme is required as a cofactor.

It localises to the membrane. It functions in the pathway secondary metabolite biosynthesis; terpenoid biosynthesis. Its function is as follows. Cytochrome P450 monooxygenase; part of the gene cluster B that mediates the biosynthesis of austinol and dehydroaustinol, two fungal meroterpenoids. The first step of the pathway is the synthesis of 3,5-dimethylorsellinic acid by the polyketide synthase ausA. 3,5-dimethylorsellinic acid is then prenylated by the polyprenyl transferase ausN. Further epoxidation by the FAD-dependent monooxygenase ausM and cyclization by the probable terpene cyclase ausL lead to the formation of protoaustinoid A. Protoaustinoid A is then oxidized to spiro-lactone preaustinoid A3 by the combined action of the FAD-binding monooxygenases ausB and ausC, and the dioxygenase ausE. Acid-catalyzed keto-rearrangement and ring contraction of the tetraketide portion of preaustinoid A3 by ausJ lead to the formation of preaustinoid A4. The aldo-keto reductase ausK, with the help of ausH, is involved in the next step by transforming preaustinoid A4 into isoaustinone which is in turn hydroxylated by the P450 monooxygenase ausI to form austinolide. Finally, the cytochrome P450 monooxygenase ausG modifies austinolide to austinol. Austinol can be further modified to dehydroaustinol which forms a diffusible complex with diorcinol that initiates conidiation. Due to genetic rearrangements of the clusters and the subsequent loss of some enzymes, the end products of the Emericella nidulans austinoid biosynthesis clusters are austinol and dehydroaustinol, even if additional enzymes, such as the O-acetyltransferase ausQ and the cytochrome P450 monooxygenase ausR are still functional. This chain is Cytochrome P450 monooxygenase ausG, found in Emericella nidulans (strain FGSC A4 / ATCC 38163 / CBS 112.46 / NRRL 194 / M139) (Aspergillus nidulans).